We begin with the raw amino-acid sequence, 332 residues long: MLHASFSNAQLTPTFYDNSCPNVSNIVRDIIINELRSDPSIAASILRLHFHDCFVNGCDASILLDNTTSFRTEKDAFGNANSARGFPVVDRIKAAVERACPRTVSCADVLTIAAQQSVNLAGGPSWRVPLGRRDSRQAFLDLANANLPAPSFTLPELKAAFANVGLNRPSDLVALSGGHTFGKNQCRFIMDRLYNFSNTGLPDPTLNTTYLQTLRQQCPRNGNQSVLVDFDLRTPTVFDNKYYVNLKEQKGLIQSDQELFSSPNATDTIPLVRSYADGTQTFFNAFVEAMNRMGNITPLTGTQGEIRLNCRVVNSNSLLHDIVEVVDFVSSM.

Positions 1–9 (MLHASFSNA) are cleaved as a signal peptide. Pyrrolidone carboxylic acid is present on Gln10. Intrachain disulfides connect Cys20/Cys100, Cys53/Cys58, Cys106/Cys310, and Cys186/Cys218. An N-linked (GlcNAc...) asparagine glycan is attached at Asn22. His51 serves as the catalytic Proton acceptor. The Ca(2+) site is built by Asp52, Val55, Gly57, Asp59, and Ser61. Asn66 is a glycosylation site (N-linked (GlcNAc...) asparagine). Residue Pro148 participates in substrate binding. Residue His179 coordinates heme b. Ca(2+) is bound at residue Thr180. Residues Asn195, Asn207, and Asn223 are each glycosylated (N-linked (GlcNAc...) asparagine). Ca(2+) contacts are provided by Asp231, Thr234, and Asp239. Asn264 is a glycosylation site (N-linked (GlcNAc...) asparagine).

Belongs to the peroxidase family. Classical plant (class III) peroxidase subfamily. Ca(2+) serves as cofactor. Heme b is required as a cofactor.

It localises to the secreted. The protein localises to the vacuole. The catalysed reaction is 2 a phenolic donor + H2O2 = 2 a phenolic radical donor + 2 H2O. In terms of biological role, removal of H(2)O(2), oxidation of toxic reductants, biosynthesis and degradation of lignin, suberization, auxin catabolism, response to environmental stresses such as wounding, pathogen attack and oxidative stress. These functions might be dependent on each isozyme/isoform in each plant tissue. The polypeptide is Peroxidase C1C (PRXC1C) (Armoracia rusticana (Horseradish)).